Reading from the N-terminus, the 357-residue chain is UDP-N-acetylglucosamine--N-acetylmuramyl-(pentapeptide) pyrophosphoryl-undecaprenol N-acetylglucosamine transferase (357 aa).

UDP-N-acetyl-alpha-D-glucosamine-binding residues include R166, S196, and Q290.

The protein belongs to the glycosyltransferase 28 family. MurG subfamily.

The protein localises to the cell membrane. It carries out the reaction Mur2Ac(oyl-L-Ala-gamma-D-Glu-L-Lys-D-Ala-D-Ala)-di-trans,octa-cis-undecaprenyl diphosphate + UDP-N-acetyl-alpha-D-glucosamine = beta-D-GlcNAc-(1-&gt;4)-Mur2Ac(oyl-L-Ala-gamma-D-Glu-L-Lys-D-Ala-D-Ala)-di-trans,octa-cis-undecaprenyl diphosphate + UDP + H(+). The protein operates within cell wall biogenesis; peptidoglycan biosynthesis. Functionally, cell wall formation. Catalyzes the transfer of a GlcNAc subunit on undecaprenyl-pyrophosphoryl-MurNAc-pentapeptide (lipid intermediate I) to form undecaprenyl-pyrophosphoryl-MurNAc-(pentapeptide)GlcNAc (lipid intermediate II). The polypeptide is UDP-N-acetylglucosamine--N-acetylmuramyl-(pentapeptide) pyrophosphoryl-undecaprenol N-acetylglucosamine transferase (Staphylococcus epidermidis (strain ATCC 35984 / DSM 28319 / BCRC 17069 / CCUG 31568 / BM 3577 / RP62A)).